A 338-amino-acid chain; its full sequence is Anthranilate phosphoribosyltransferase (338 aa).

Residues Gly-80, 83-84 (GD), Thr-88, 90-93 (NIST), 108-116 (KHGNRAMSS), and Ser-120 each bind 5-phospho-alpha-D-ribose 1-diphosphate. Gly-80 lines the anthranilate pocket. Ser-92 contacts Mg(2+). Asn-111 serves as a coordination point for anthranilate. Arg-166 is a binding site for anthranilate. Mg(2+) contacts are provided by Asp-225 and Glu-226.

The protein belongs to the anthranilate phosphoribosyltransferase family. Homodimer. Mg(2+) serves as cofactor.

The enzyme catalyses N-(5-phospho-beta-D-ribosyl)anthranilate + diphosphate = 5-phospho-alpha-D-ribose 1-diphosphate + anthranilate. It participates in amino-acid biosynthesis; L-tryptophan biosynthesis; L-tryptophan from chorismate: step 2/5. Catalyzes the transfer of the phosphoribosyl group of 5-phosphorylribose-1-pyrophosphate (PRPP) to anthranilate to yield N-(5'-phosphoribosyl)-anthranilate (PRA). This is Anthranilate phosphoribosyltransferase from Herpetosiphon aurantiacus (strain ATCC 23779 / DSM 785 / 114-95).